Here is a 249-residue protein sequence, read N- to C-terminus: Proteasome activator complex subunit 1 (249 aa).

The disordered stretch occupies residues 60–102; it reads PLDIPVPDPVKEKEKEERKKQQEKEEKDEKKKGDEDDKGPPCG. A compositionally biased stretch (basic and acidic residues) spans 68 to 98; that stretch reads PVKEKEKEERKKQQEKEEKDEKKKGDEDDKG.

It belongs to the PA28 family. Heterodimer of PSME1 and PSME2, which forms a hexameric ring. PSME1 can form homoheptamers.

Implicated in immunoproteasome assembly and required for efficient antigen processing. The PA28 activator complex enhances the generation of class I binding peptides by altering the cleavage pattern of the proteasome. The chain is Proteasome activator complex subunit 1 (Psme1) from Rattus norvegicus (Rat).